Reading from the N-terminus, the 128-residue chain is Lymphocyte antigen 6D (128 aa).

The signal sequence occupies residues 1 to 20; it reads MKTVLLFLVALAAAAGPAQA. One can recognise a UPAR/Ly6 domain in the interval 21-108; the sequence is LRCHVCTSSS…WQSAAPARTS (88 aa). Intrachain disulfides connect Cys-23-Cys-45, Cys-26-Cys-32, Cys-38-Cys-63, Cys-67-Cys-86, and Cys-87-Cys-92. Ser-98 is lipidated: GPI-anchor amidated serine. Positions 99 to 128 are cleaved as a propeptide — removed in mature form; that stretch reads WQSAAPARTSAHLGLALACGLLALLWAPGL.

The protein localises to the cell membrane. Functionally, may act as a specification marker at earliest stage specification of lymphocytes between B- and T-cell development. Marks the earliest stage of B-cell specification. This is Lymphocyte antigen 6D (LY6D) from Bos taurus (Bovine).